The following is a 421-amino-acid chain: Tyrosine--tRNA ligase (421 aa).

Tyr38 is a binding site for L-tyrosine. A 'HIGH' region motif is present at residues 43-52; that stretch reads PTGDSLHIGH. Positions 169 and 173 each coordinate L-tyrosine. Positions 231-235 match the 'KMSKS' region motif; sequence KFGKS. Residue Lys234 coordinates ATP. The region spanning 353–419 is the S4 RNA-binding domain; that stretch reads KNLVDFLVDT…GKKKYTLVHI (67 aa).

It belongs to the class-I aminoacyl-tRNA synthetase family. TyrS type 1 subfamily. In terms of assembly, homodimer.

It localises to the cytoplasm. It catalyses the reaction tRNA(Tyr) + L-tyrosine + ATP = L-tyrosyl-tRNA(Tyr) + AMP + diphosphate + H(+). In terms of biological role, catalyzes the attachment of tyrosine to tRNA(Tyr) in a two-step reaction: tyrosine is first activated by ATP to form Tyr-AMP and then transferred to the acceptor end of tRNA(Tyr). This chain is Tyrosine--tRNA ligase, found in Lactobacillus delbrueckii subsp. bulgaricus (strain ATCC BAA-365 / Lb-18).